A 343-amino-acid chain; its full sequence is Dihydroorotase (343 aa).

Zn(2+) contacts are provided by H14 and H16. Substrate contacts are provided by residues H16–R18 and N42. Zn(2+) contacts are provided by K97, H136, H170, and D242. An N6-carboxylysine modification is found at K97. H136 is a substrate binding site. D242 is an active-site residue. Substrate is bound by residues H246 and A258.

Belongs to the metallo-dependent hydrolases superfamily. DHOase family. Class II DHOase subfamily. In terms of assembly, homodimer. Zn(2+) serves as cofactor.

It catalyses the reaction (S)-dihydroorotate + H2O = N-carbamoyl-L-aspartate + H(+). Its pathway is pyrimidine metabolism; UMP biosynthesis via de novo pathway; (S)-dihydroorotate from bicarbonate: step 3/3. In terms of biological role, catalyzes the reversible cyclization of carbamoyl aspartate to dihydroorotate. The chain is Dihydroorotase from Helicobacter hepaticus (strain ATCC 51449 / 3B1).